A 194-amino-acid polypeptide reads, in one-letter code: Histone H1.0 (194 aa).

Residue Met1 is modified to N-acetylmethionine. The interval 1-26 (MTENSTSTPAAKPKRAKAAKKSTDHP) is disordered. An N-acetylthreonine; in Histone H1.0, N-terminally processed modification is found at Thr2. Positions 24–97 (DHPKYSDMIV…GASGSFRLAK (74 aa)) constitute an H15 domain. At Arg42 the chain carries Citrulline. The tract at residues 86-194 (GVGASGSFRL…SSAKRASKKK (109 aa)) is disordered. Ser104 is subject to ADP-ribosylserine. Over residues 105-194 (VAFKKTKKEV…SSAKRASKKK (90 aa)) the composition is skewed to basic residues.

This sequence belongs to the histone H1/H5 family. Post-translationally, ADP-ribosylated on Ser-104 in response to DNA damage.

It is found in the nucleus. The protein resides in the chromosome. Histones H1 are necessary for the condensation of nucleosome chains into higher-order structures. The histones H1.0 are found in cells that are in terminal stages of differentiation or that have low rates of cell division. The sequence is that of Histone H1.0 (H1-0) from Rattus norvegicus (Rat).